The following is a 194-amino-acid chain: GTP cyclohydrolase 1 (194 aa).

Zn(2+) is bound by residues cysteine 83, histidine 86, and cysteine 155.

It belongs to the GTP cyclohydrolase I family. Toroid-shaped homodecamer, composed of two pentamers of five dimers.

It carries out the reaction GTP + H2O = 7,8-dihydroneopterin 3'-triphosphate + formate + H(+). It functions in the pathway cofactor biosynthesis; 7,8-dihydroneopterin triphosphate biosynthesis; 7,8-dihydroneopterin triphosphate from GTP: step 1/1. The chain is GTP cyclohydrolase 1 (folE) from Streptococcus pyogenes serotype M1.